The sequence spans 272 residues: Zinc transporter ZupT (272 aa).

The next 8 helical transmembrane spans lie at 11–31 (IALA…LMVV), 40–60 (LLAF…LTEI), 76–96 (LGFT…MVID), 126–146 (LMTA…TFFA), 158–178 (AFAI…PVYF), 189–209 (ASLL…LALF), 211–231 (VLSD…MVFL), and 250–270 (VYGL…FRFA). Fe(2+) contacts are provided by asparagine 136 and glutamate 139. Residues glutamate 139 and histidine 164 each contribute to the Zn(2+) site. 3 residues coordinate Fe(2+): asparagine 165, glutamate 168, and glutamate 197. Glutamate 168 is a binding site for Zn(2+).

The protein belongs to the ZIP transporter (TC 2.A.5) family. ZupT subfamily.

It localises to the cell inner membrane. The catalysed reaction is Zn(2+)(in) = Zn(2+)(out). In terms of biological role, mediates zinc uptake. May also transport other divalent cations. The sequence is that of Zinc transporter ZupT from Xanthomonas axonopodis pv. citri (strain 306).